The chain runs to 78 residues: Small ribosomal subunit protein bS18 (78 aa).

The protein belongs to the bacterial ribosomal protein bS18 family. As to quaternary structure, part of the 30S ribosomal subunit. Forms a tight heterodimer with protein bS6.

Binds as a heterodimer with protein bS6 to the central domain of the 16S rRNA, where it helps stabilize the platform of the 30S subunit. The polypeptide is Small ribosomal subunit protein bS18 (Kocuria rhizophila (strain ATCC 9341 / DSM 348 / NBRC 103217 / DC2201)).